A 272-amino-acid chain; its full sequence is MDPYLLMWGLLTFITVPGCQAELCDDDPPKITHATFKAVAYKEGTMLNCECKRGFRRIKSGSPYMLCTGNSSHSSWDNQCQCTSSAARNTTKQVTPQPEEQKERKTTEMQSQMQLADQVSLPGHCREPPPWENEATERIYHFVVGQMVYYQCVQGYRALHRGPAESICKMTHGKTRWTQPQLICTGETEPSQFPGEEEPQASPDGLPESETSRLVTTTDFRIQTEVAATMETFIFTTEYQVAVAGCVFLLISVLLLSGLTWQRRQRKNRRTI.

A signal peptide spans 1–21; sequence MDPYLLMWGLLTFITVPGCQA. Residues 22-84 enclose the Sushi 1 domain; sequence ELCDDDPPKI…SWDNQCQCTS (63 aa). Residues 22–240 lie on the Extracellular side of the membrane; sequence ELCDDDPPKI…ETFIFTTEYQ (219 aa). 3 cysteine pairs are disulfide-bonded: C24-C67, C49-C80, and C51-C82. 2 N-linked (GlcNAc...) asparagine glycosylation sites follow: N70 and N89. Residues 87 to 98 are compositionally biased toward polar residues; the sequence is ARNTTKQVTPQP. Residues 87–109 form a disordered region; the sequence is ARNTTKQVTPQPEEQKERKTTEM. In terms of domain architecture, Sushi 2 spans 123 to 186; the sequence is GHCREPPPWE…WTQPQLICTG (64 aa). Cystine bridges form between C125-C168 and C152-C184. The tract at residues 186 to 213 is disordered; the sequence is GETEPSQFPGEEEPQASPDGLPESETSR. The chain crosses the membrane as a helical span at residues 241 to 259; the sequence is VAVAGCVFLLISVLLLSGL. Residues 260 to 272 are Cytoplasmic-facing; the sequence is TWQRRQRKNRRTI.

As to quaternary structure, non-covalent dimer of an alpha and a beta subunit. IL2R exists in 3 different forms: a high affinity dimer, an intermediate affinity monomer (beta subunit), and a low affinity monomer (alpha subunit). The high and intermediate affinity forms also associate with a gamma subunit.

The protein resides in the membrane. Receptor for interleukin-2. The receptor is involved in the regulation of immune tolerance by controlling regulatory T cells (TREGs) activity. TREGs suppress the activation and expansion of autoreactive T-cells. This Macaca mulatta (Rhesus macaque) protein is Interleukin-2 receptor subunit alpha (IL2RA).